Reading from the N-terminus, the 286-residue chain is NAD kinase (286 aa).

Aspartate 74 functions as the Proton acceptor in the catalytic mechanism. NAD(+) is bound by residues aspartate 74–glycine 75, asparagine 148–aspartate 149, aspartate 178, alanine 186, threonine 189–serine 194, and glutamine 244.

This sequence belongs to the NAD kinase family. A divalent metal cation serves as cofactor.

It localises to the cytoplasm. The enzyme catalyses NAD(+) + ATP = ADP + NADP(+) + H(+). Functionally, involved in the regulation of the intracellular balance of NAD and NADP, and is a key enzyme in the biosynthesis of NADP. Catalyzes specifically the phosphorylation on 2'-hydroxyl of the adenosine moiety of NAD to yield NADP. The sequence is that of NAD kinase from Campylobacter jejuni (strain RM1221).